We begin with the raw amino-acid sequence, 655 residues long: Ribonuclease 3 (655 aa).

Disordered stretches follow at residues 1–148 (MENL…NSEK) and 171–376 (LIAP…NIPL). The interval 1-400 (MENLEKNTKK…NYIKDNYPVI (400 aa)) is unknown. A compositionally biased stretch (basic residues) spans 8-20 (TKKKIKKPNNFKK). Basic and acidic residues-rich tracts occupy residues 21–34 (NNKD…DKPT) and 69–89 (DYEK…RSDE). Positions 92-102 (NNNSKKQNNNK) are enriched in low complexity. Positions 103–115 (QAKKKANKNKKQK) are enriched in basic residues. A compositionally biased stretch (polar residues) spans 135–148 (AANNQVKAIPNSEK). Residues 206 to 223 (NNFVNNQKNHNKNNAGNK) show a composition bias toward low complexity. Polar residues-rich tracts occupy residues 229 to 242 (PTKP…SKST) and 250 to 259 (PNFTSNQPKP). Basic and acidic residues-rich tracts occupy residues 260–274 (TQKE…KKAE) and 298–309 (DQTKKKQPKENK). Over residues 310–332 (NQQIKAVNLNNNQQKTNNNNQKN) the composition is skewed to low complexity. Over residues 333 to 350 (SVDKSENDNNKKKSEANQ) the composition is skewed to basic and acidic residues. Low complexity predominate over residues 351-360 (KQENLNPNNN). Positions 401–655 (YADLKEKNRL…KFRGLLKLEK (255 aa)) are RNase 3. One can recognise an RNase III domain in the interval 432-556 (LELLLKKFKV…FIGAMYLDQG (125 aa)). Mg(2+) is bound at residue E472. D476 is a catalytic residue. 2 residues coordinate Mg(2+): D542 and E545. E545 is a catalytic residue. Residues 582–649 (DYKSIFQEII…AKEAISKFRG (68 aa)) form the DRBM domain.

It belongs to the ribonuclease III family. In terms of assembly, homodimer. Mg(2+) is required as a cofactor.

The protein localises to the cytoplasm. It catalyses the reaction Endonucleolytic cleavage to 5'-phosphomonoester.. In terms of biological role, digests double-stranded RNA. Involved in the processing of primary rRNA transcript to yield the immediate precursors to the large and small rRNAs (23S and 16S). Processes some mRNAs, and tRNAs when they are encoded in the rRNA operon. Processes pre-crRNA and tracrRNA of type II CRISPR loci if present in the organism. This is Ribonuclease 3 (rnc) from Mycoplasmoides gallisepticum (strain R(low / passage 15 / clone 2)) (Mycoplasma gallisepticum).